The following is a 265-amino-acid chain: Inositol-1-monophosphatase (265 aa).

Mg(2+) contacts are provided by E69, D87, I89, and D90. E69 lines the substrate pocket. Substrate-binding positions include 89–92, R185, and D214; that span reads IDGT. D214 is a binding site for Mg(2+).

This sequence belongs to the inositol monophosphatase superfamily. Mg(2+) is required as a cofactor.

The catalysed reaction is a myo-inositol phosphate + H2O = myo-inositol + phosphate. It catalyses the reaction a ribonucleoside 5'-phosphate + H2O = a ribonucleoside + phosphate. Functionally, hydrolyzes myo-inositol monophosphate. Catalyzes the dephosphorylation of GMP and IMP. The chain is Inositol-1-monophosphatase from Bacillus subtilis (strain 168).